The primary structure comprises 574 residues: Arginine--tRNA ligase (574 aa).

The 'HIGH' region motif lies at Pro121 to His131.

Belongs to the class-I aminoacyl-tRNA synthetase family. As to quaternary structure, monomer.

It is found in the cytoplasm. It carries out the reaction tRNA(Arg) + L-arginine + ATP = L-arginyl-tRNA(Arg) + AMP + diphosphate. The polypeptide is Arginine--tRNA ligase (Buchnera aphidicola subsp. Acyrthosiphon pisum (strain Tuc7)).